The following is a 331-amino-acid chain: Inactive serine/threonine-protein kinase BKN1 (331 aa).

Gly2 carries the N-myristoyl glycine lipid modification. A lipid anchor (S-palmitoyl cysteine) is attached at Cys4. Positions 58–328 (DYSVRKFYKG…VLDGLNHIAE (271 aa)) constitute a Protein kinase domain.

This sequence belongs to the protein kinase superfamily. Ser/Thr protein kinase family. As to expression, restricted to stigma in flowers.

Its subcellular location is the cell membrane. It is found in the nucleus. Its function is as follows. Collaboratively with BKN2/SZE2, involved in compatible pollen-stigma interactions. The protein is Inactive serine/threonine-protein kinase BKN1 of Arabidopsis thaliana (Mouse-ear cress).